Here is a 144-residue protein sequence, read N- to C-terminus: uncharacterized protein (144 aa).

Basic residues predominate over residues 124–133 (KALNRKKSKT). Residues 124–144 (KALNRKKSKTKNGEKNGEGKS) are disordered. Basic and acidic residues predominate over residues 134–144 (KNGEKNGEGKS).

This is an uncharacterized protein from Acidianus filamentous virus 1 (isolate United States/Yellowstone) (AFV-1).